The primary structure comprises 340 residues: Fructose-1,6-bisphosphatase class 1 (340 aa).

The Mg(2+) site is built by E107, D126, L128, and D129. N215 is a substrate binding site. E287 provides a ligand contact to Mg(2+).

The protein belongs to the FBPase class 1 family. In terms of assembly, homotetramer. Mg(2+) is required as a cofactor.

Its subcellular location is the cytoplasm. The catalysed reaction is beta-D-fructose 1,6-bisphosphate + H2O = beta-D-fructose 6-phosphate + phosphate. It participates in carbohydrate biosynthesis; gluconeogenesis. The polypeptide is Fructose-1,6-bisphosphatase class 1 (Brucella suis (strain ATCC 23445 / NCTC 10510)).